A 443-amino-acid chain; its full sequence is Trigger factor (443 aa).

Residues 165–250 (GDQIVMDFLG…VKEVKKPVPA (86 aa)) form the PPIase FKBP-type domain.

Belongs to the FKBP-type PPIase family. Tig subfamily.

It is found in the cytoplasm. The catalysed reaction is [protein]-peptidylproline (omega=180) = [protein]-peptidylproline (omega=0). Its function is as follows. Involved in protein export. Acts as a chaperone by maintaining the newly synthesized protein in an open conformation. Functions as a peptidyl-prolyl cis-trans isomerase. The protein is Trigger factor of Roseobacter denitrificans (strain ATCC 33942 / OCh 114) (Erythrobacter sp. (strain OCh 114)).